The primary structure comprises 159 residues: Secreted RxLR effector protein 50 (159 aa).

Positions Met-1–Gly-19 are cleaved as a signal peptide. The RxLR-dEER signature appears at Arg-38–Arg-54.

This sequence belongs to the RxLR effector family.

Its subcellular location is the secreted. It localises to the host nucleus. The protein resides in the host cytoplasm. In terms of biological role, secreted effector that completely suppresses the host cell death induced by cell death-inducing proteins. The protein is Secreted RxLR effector protein 50 of Plasmopara viticola (Downy mildew of grapevine).